We begin with the raw amino-acid sequence, 403 residues long: Multifunctional CCA protein (403 aa).

ATP-binding residues include Gly8 and Arg11. CTP contacts are provided by Gly8 and Arg11. Asp21 and Asp23 together coordinate Mg(2+). The ATP site is built by Arg91, Arg137, and Arg140. Arg91, Arg137, and Arg140 together coordinate CTP. One can recognise an HD domain in the interval 228–329; that stretch reads TGIHTLMVAK…LKVLGLLDVW (102 aa).

It belongs to the tRNA nucleotidyltransferase/poly(A) polymerase family. Bacterial CCA-adding enzyme type 1 subfamily. Monomer. Can also form homodimers and oligomers. The cofactor is Mg(2+). Ni(2+) is required as a cofactor.

The catalysed reaction is a tRNA precursor + 2 CTP + ATP = a tRNA with a 3' CCA end + 3 diphosphate. It carries out the reaction a tRNA with a 3' CCA end + 2 CTP + ATP = a tRNA with a 3' CCACCA end + 3 diphosphate. Functionally, catalyzes the addition and repair of the essential 3'-terminal CCA sequence in tRNAs without using a nucleic acid template. Adds these three nucleotides in the order of C, C, and A to the tRNA nucleotide-73, using CTP and ATP as substrates and producing inorganic pyrophosphate. tRNA 3'-terminal CCA addition is required both for tRNA processing and repair. Also involved in tRNA surveillance by mediating tandem CCA addition to generate a CCACCA at the 3' terminus of unstable tRNAs. While stable tRNAs receive only 3'-terminal CCA, unstable tRNAs are marked with CCACCA and rapidly degraded. The chain is Multifunctional CCA protein from Vibrio cholerae serotype O1 (strain ATCC 39541 / Classical Ogawa 395 / O395).